The primary structure comprises 217 residues: Fucoxanthin-chlorophyll a-c binding protein A, chloroplastic (217 aa).

A chloroplast-targeting transit peptide spans 1 to 39 (MKSAVMAVACAAAPGLRRPSAFNGAALTTSAKSSSAMKM). The next 3 helical transmembrane spans lie at 81 to 101 (IAMLAIAGHLTQQNARLPGML), 122 to 142 (IPPAGLAQIFAFIGFLELAVM), and 183 to 203 (GRAAQMGILALMVHEELNNKP).

This sequence belongs to the fucoxanthin chlorophyll protein family. The LHC complex of chromophytic algae is composed of fucoxanthin, chlorophyll A and C bound non-covalently by fucoxanthin chlorophyll proteins (FCPs). The ratio of pigments in this LHC is; fucoxanthin: chlorophyll C: chlorophyll A; (0.6-1): (0.1-0.3): (1).

The protein resides in the plastid. It is found in the chloroplast thylakoid membrane. Its function is as follows. The light-harvesting complex (LHC) functions as a light receptor, it captures and delivers excitation energy to photosystems with which it is closely associated. Energy is transferred from the carotenoid and chlorophyll C (or B) to chlorophyll A and the photosynthetic reaction centers where it is used to synthesize ATP and reducing power. The polypeptide is Fucoxanthin-chlorophyll a-c binding protein A, chloroplastic (FCPA) (Macrocystis pyrifera (Giant kelp)).